We begin with the raw amino-acid sequence, 440 residues long: 3-phosphoshikimate 1-carboxyvinyltransferase (440 aa).

3 residues coordinate 3-phosphoshikimate: Lys25, Ser26, and Arg30. Phosphoenolpyruvate is bound at residue Lys25. Gly96 and Arg124 together coordinate phosphoenolpyruvate. 4 residues coordinate 3-phosphoshikimate: Ser168, Gln169, Asp310, and Lys337. Gln169 contributes to the phosphoenolpyruvate binding site. The active-site Proton acceptor is Asp310. The phosphoenolpyruvate site is built by Arg341, Arg382, and Lys409.

It belongs to the EPSP synthase family. Monomer.

Its subcellular location is the cytoplasm. The catalysed reaction is 3-phosphoshikimate + phosphoenolpyruvate = 5-O-(1-carboxyvinyl)-3-phosphoshikimate + phosphate. It participates in metabolic intermediate biosynthesis; chorismate biosynthesis; chorismate from D-erythrose 4-phosphate and phosphoenolpyruvate: step 6/7. Its function is as follows. Catalyzes the transfer of the enolpyruvyl moiety of phosphoenolpyruvate (PEP) to the 5-hydroxyl of shikimate-3-phosphate (S3P) to produce enolpyruvyl shikimate-3-phosphate and inorganic phosphate. This Chlamydia trachomatis serovar D (strain ATCC VR-885 / DSM 19411 / UW-3/Cx) protein is 3-phosphoshikimate 1-carboxyvinyltransferase.